The following is a 126-amino-acid chain: Small ribosomal subunit protein uS13 (126 aa).

Residues Gln101–Lys126 are disordered.

The protein belongs to the universal ribosomal protein uS13 family. Part of the 30S ribosomal subunit. Forms a loose heterodimer with protein S19. Forms two bridges to the 50S subunit in the 70S ribosome.

Its function is as follows. Located at the top of the head of the 30S subunit, it contacts several helices of the 16S rRNA. In the 70S ribosome it contacts the 23S rRNA (bridge B1a) and protein L5 of the 50S subunit (bridge B1b), connecting the 2 subunits; these bridges are implicated in subunit movement. Contacts the tRNAs in the A and P-sites. In Karelsulcia muelleri (strain GWSS) (Sulcia muelleri), this protein is Small ribosomal subunit protein uS13.